We begin with the raw amino-acid sequence, 557 residues long: MNYNDTTEFCFPFGQPSFPTSAMTEGSFDGQFSEFDPTFTSPADTALSDIANLPIDLHKDALFANAPGKGDVDFDSVSMLQLLSDYPLAFNSTENNQKLQTNPSARWSLLDSMDFDNQRQCSDLESAQLGDSGLLKSTILSNSHIDIAALSSSKTSEPTPPFSYVQTPCIPTPSSALIDTPFPGALDSEFGFDESQAPLFPASDGDCQRAFASISYPTNYGCKLSNLGFMSPQSPVKRELNDSTSPSKLSESSSSLTGSSSALLSQSEFLGSVPSLSDSIATVDPFFSFESFETDEKARSLLMDASLKLPQFSTPNLSSNSSSLSLKSTLAEGMKGSTPLAAVKTEKASKAARVMKQKKHREHVCFNCGVTETPLWRRTSDKLNFLCNACGLYNKQYGVMRPLSPRNKGSSKALENLVCANCSSTKTSLWRKDRHGQTVCNACGLYARLHGHNRPIGLKKNKITRRRRGKGPGGEDGMSDEVKSEFPVLSKSVTMAEILSSKGLESPQLTNSVSVSKMPNTDADVSLEHAKISFDSLDNSVIVKKEEEIENKFSVSC.

Positions 234-258 (SPVKRELNDSTSPSKLSESSSSLTG) are disordered. A compositionally biased stretch (low complexity) spans 243–258 (STSPSKLSESSSSLTG). GATA-type zinc fingers lie at residues 365-390 (CFNC…CNAC) and 419-443 (CANC…CNAC).

The protein localises to the nucleus. It localises to the cytoplasm. Its function is as follows. Activates genes required for amino acid biosynthesis and acts as a master transcriptional regulator during amino acid starvation. Binds variations of the DNA sequence 5'-GAT[AC]GC-3'. The chain is Transcription factor fil1 from Schizosaccharomyces pombe (strain 972 / ATCC 24843) (Fission yeast).